A 250-amino-acid chain; its full sequence is Small ribosomal subunit protein uS3 (250 aa).

The region spanning 39–111 (IRPLIKNHYP…KVQINIFEVK (73 aa)) is the KH type-2 domain.

It belongs to the universal ribosomal protein uS3 family. As to quaternary structure, part of the 30S ribosomal subunit. Forms a tight complex with proteins S10 and S14.

In terms of biological role, binds the lower part of the 30S subunit head. Binds mRNA in the 70S ribosome, positioning it for translation. This Ziziphus jujuba witches'-broom phytoplasma protein is Small ribosomal subunit protein uS3.